The following is a 187-amino-acid chain: Large ribosomal subunit protein uL5 (187 aa).

The protein belongs to the universal ribosomal protein uL5 family. In terms of assembly, part of the 50S ribosomal subunit; part of the 5S rRNA/L5/L18/L25 subcomplex. Contacts the 5S rRNA and the P site tRNA. Forms a bridge to the 30S subunit in the 70S ribosome.

Its function is as follows. This is one of the proteins that bind and probably mediate the attachment of the 5S RNA into the large ribosomal subunit, where it forms part of the central protuberance. In the 70S ribosome it contacts protein S13 of the 30S subunit (bridge B1b), connecting the 2 subunits; this bridge is implicated in subunit movement. Contacts the P site tRNA; the 5S rRNA and some of its associated proteins might help stabilize positioning of ribosome-bound tRNAs. The protein is Large ribosomal subunit protein uL5 of Roseobacter denitrificans (strain ATCC 33942 / OCh 114) (Erythrobacter sp. (strain OCh 114)).